Here is a 112-residue protein sequence, read N- to C-terminus: Putative acyl carrier protein, mitochondrial (112 aa).

A mitochondrion-targeting transit peptide spans 1 to 28 (MLSRFSSQLRFISAVRPVIPKFQPLRFY). Residues 33–109 (PDAEKRILKV…DAISYITKNP (77 aa)) form the Carrier domain. Serine 69 carries the O-(pantetheine 4'-phosphoryl)serine modification.

It belongs to the acyl carrier protein (ACP) family. Post-translationally, 4'-phosphopantetheine is transferred from CoA to a specific serine of apo-ACP by acpS. This modification is essential for activity because fatty acids are bound in thioester linkage to the sulfhydryl of the prosthetic group.

It is found in the mitochondrion. It participates in lipid metabolism; fatty acid biosynthesis. Carrier of the growing fatty acid chain in fatty acid biosynthesis. May be involved in the synthesis of very-long-chain fatty acids. The protein is Putative acyl carrier protein, mitochondrial of Schizosaccharomyces pombe (strain 972 / ATCC 24843) (Fission yeast).